Consider the following 531-residue polypeptide: CCA tRNA nucleotidyltransferase, mitochondrial (531 aa).

Belongs to the tRNA nucleotidyltransferase/poly(A) polymerase family.

It localises to the mitochondrion. It is found in the cytoplasm. The protein resides in the nucleus. The enzyme catalyses a tRNA precursor + 2 CTP + ATP = a tRNA with a 3' CCA end + 3 diphosphate. Its function is as follows. Nucleotidyltransferase that catalyzes the addition and repair of the essential 3'-terminal CCA sequence in tRNAs, which is necessary for the attachment of amino acids to the 3' terminus of tRNA molecules, using CTP and ATP as substrates. tRNA 3'-terminal CCA addition is required both for tRNA processing and repair. Also involved in tRNA surveillance by mediating tandem CCA addition to generate a CCACCA at the 3' terminus of unstable tRNAs. While stable tRNAs receive only 3'-terminal CCA, unstable tRNAs are marked with CCACCA and rapidly degraded. The structural flexibility of RNA controls the choice between CCA versus CCACCA addition: following the first CCA addition cycle, nucleotide-binding to the active site triggers a clockwise screw motion, producing torque on the RNA. This ejects stable RNAs, whereas unstable RNAs are refolded while bound to the enzyme and subjected to a second CCA catalytic cycle. This is CCA tRNA nucleotidyltransferase, mitochondrial (CCA1) from Candida glabrata (strain ATCC 2001 / BCRC 20586 / JCM 3761 / NBRC 0622 / NRRL Y-65 / CBS 138) (Yeast).